We begin with the raw amino-acid sequence, 512 residues long: Histidine ammonia-lyase (512 aa).

A cross-link (5-imidazolinone (Ala-Gly)) is located at residues 145–147 (ASG). Serine 146 carries the 2,3-didehydroalanine (Ser) modification.

The protein belongs to the PAL/histidase family. Contains an active site 4-methylidene-imidazol-5-one (MIO), which is formed autocatalytically by cyclization and dehydration of residues Ala-Ser-Gly.

Its subcellular location is the cytoplasm. The catalysed reaction is L-histidine = trans-urocanate + NH4(+). Its pathway is amino-acid degradation; L-histidine degradation into L-glutamate; N-formimidoyl-L-glutamate from L-histidine: step 1/3. The sequence is that of Histidine ammonia-lyase from Pseudomonas fluorescens (strain SBW25).